The following is a 483-amino-acid chain: Glycogen synthase (483 aa).

Residue K18 participates in ADP-alpha-D-glucose binding.

The protein belongs to the glycosyltransferase 1 family. Bacterial/plant glycogen synthase subfamily.

The enzyme catalyses [(1-&gt;4)-alpha-D-glucosyl](n) + ADP-alpha-D-glucose = [(1-&gt;4)-alpha-D-glucosyl](n+1) + ADP + H(+). Its pathway is glycan biosynthesis; glycogen biosynthesis. Synthesizes alpha-1,4-glucan chains using ADP-glucose. This chain is Glycogen synthase, found in Rhodopseudomonas palustris (strain ATCC BAA-98 / CGA009).